A 684-amino-acid chain; its full sequence is Probable pectin methyltransferase QUA2 (684 aa).

The tract at residues 1–35 (MSMPLQRGISGVRVSDSSDDLRDSQMKDKTERARS) is disordered. The Cytoplasmic segment spans residues 1–86 (MSMPLQRGIS…RHRLMLLFLK (86 aa)). Residues 19-35 (DDLRDSQMKDKTERARS) show a composition bias toward basic and acidic residues. Residues 87–107 (ISLVLIVVIALAGSFWWTISI) form a helical; Signal-anchor for type II membrane protein membrane-spanning segment. Residues 108–684 (STSSRGHVYH…QKPFTKRQSI (577 aa)) lie on the Lumenal side of the membrane. 2 N-linked (GlcNAc...) asparagine glycosylation sites follow: asparagine 161 and asparagine 476.

This sequence belongs to the methyltransferase superfamily. In terms of tissue distribution, ubiquitous.

The protein localises to the golgi apparatus membrane. It participates in glycan metabolism; pectin biosynthesis. May be involved in the synthesis of homogalacturonan. Required for normal cell adhesion and plant development. The sequence is that of Probable pectin methyltransferase QUA2 (QUA2) from Arabidopsis thaliana (Mouse-ear cress).